Reading from the N-terminus, the 320-residue chain is Beta-ketoacyl-[acyl-carrier-protein] synthase III (320 aa).

Catalysis depends on residues Cys-112 and His-245. The tract at residues Gln-246–Arg-250 is ACP-binding. The active site involves Asn-275.

This sequence belongs to the thiolase-like superfamily. FabH family. In terms of assembly, homodimer.

The protein resides in the cytoplasm. The enzyme catalyses malonyl-[ACP] + acetyl-CoA + H(+) = 3-oxobutanoyl-[ACP] + CO2 + CoA. The protein operates within lipid metabolism; fatty acid biosynthesis. Catalyzes the condensation reaction of fatty acid synthesis by the addition to an acyl acceptor of two carbons from malonyl-ACP. Catalyzes the first condensation reaction which initiates fatty acid synthesis and may therefore play a role in governing the total rate of fatty acid production. Possesses both acetoacetyl-ACP synthase and acetyl transacylase activities. Its substrate specificity determines the biosynthesis of branched-chain and/or straight-chain of fatty acids. This Streptococcus thermophilus (strain ATCC BAA-250 / LMG 18311) protein is Beta-ketoacyl-[acyl-carrier-protein] synthase III.